The chain runs to 128 residues: Small ribosomal subunit protein uS9 (128 aa).

The protein belongs to the universal ribosomal protein uS9 family. In terms of assembly, part of the 30S ribosomal subunit. Contacts proteins S7 and S10.

In terms of biological role, part of the top of the head of the 30S subunit. The C-terminal region penetrates the head emerging in the P-site where it contacts tRNA. This Thermus thermophilus (strain ATCC BAA-163 / DSM 7039 / HB27) protein is Small ribosomal subunit protein uS9 (rpsI).